The primary structure comprises 85 residues: Large ribosomal subunit protein bL27 (85 aa).

It belongs to the bacterial ribosomal protein bL27 family.

In Pseudomonas fluorescens (strain ATCC BAA-477 / NRRL B-23932 / Pf-5), this protein is Large ribosomal subunit protein bL27.